Reading from the N-terminus, the 193-residue chain is UPF0397 protein PA0141 (193 aa).

The next 5 helical transmembrane spans lie at 11–31, 43–63, 69–89, 109–129, and 147–167; these read VTIA…SIPI, FLVF…GLLG, FFLF…LGFL, ILFF…LIAP, and GFLV…FLMS.

The protein belongs to the UPF0397 family.

The protein localises to the cell membrane. The chain is UPF0397 protein PA0141 from Phytoplasma australiense.